The sequence spans 114 residues: Superoxide dismutase [Cu-Zn] (114 aa).

Cu cation contacts are provided by His37, His39, and His54. Positions 48-68 (CMSSGPHFNPRNKEHGAPTDE) are disordered. Residues His54, His62, His71, and Asp74 each coordinate Zn(2+). Over residues 58–68 (RNKEHGAPTDE) the composition is skewed to basic and acidic residues. Residue His111 participates in Cu cation binding.

Belongs to the Cu-Zn superoxide dismutase family. Homodimer. Requires Cu cation as cofactor. The cofactor is Zn(2+).

It localises to the cytoplasm. The catalysed reaction is 2 superoxide + 2 H(+) = H2O2 + O2. In terms of biological role, destroys radicals which are normally produced within the cells and which are toxic to biological systems. The chain is Superoxide dismutase [Cu-Zn] from Drosophila miranda (Fruit fly).